The following is a 55-amino-acid chain: Large ribosomal subunit protein bL33 (55 aa).

This sequence belongs to the bacterial ribosomal protein bL33 family.

The sequence is that of Large ribosomal subunit protein bL33 from Bartonella quintana (strain Toulouse) (Rochalimaea quintana).